Here is a 644-residue protein sequence, read N- to C-terminus: Probable potassium transport system protein Kup (644 aa).

Helical transmembrane passes span 10 to 30, 56 to 76, 106 to 126, 143 to 163, 175 to 195, 212 to 232, 252 to 272, 282 to 302, 343 to 363, 371 to 391, 403 to 423, and 425 to 445; these read GGAT…GDIG, ILSL…AWVI, WWIL…GVIT, PAWK…LFMV, FGPS…TWIV, FFGI…LAVT, AWYF…GALL, PFFM…SGIA, IYLP…ILWF, FAYG…VFFV, AGLF…ANLL, and FVEG…TMST.

It belongs to the HAK/KUP transporter (TC 2.A.72) family.

It is found in the cell inner membrane. The enzyme catalyses K(+)(in) + H(+)(in) = K(+)(out) + H(+)(out). In terms of biological role, transport of potassium into the cell. Likely operates as a K(+):H(+) symporter. This is Probable potassium transport system protein Kup from Acidithiobacillus ferrooxidans (strain ATCC 23270 / DSM 14882 / CIP 104768 / NCIMB 8455) (Ferrobacillus ferrooxidans (strain ATCC 23270)).